A 393-amino-acid chain; its full sequence is Putative cytochrome P450 143 (393 aa).

Cys342 is a heme binding site.

It belongs to the cytochrome P450 family. It depends on heme as a cofactor.

The sequence is that of Putative cytochrome P450 143 (cyp143) from Mycobacterium bovis (strain ATCC BAA-935 / AF2122/97).